The following is a 338-amino-acid chain: Lipoate-protein ligase A (338 aa).

The BPL/LPL catalytic domain maps to 29-216 (PATQRVLFLW…AFFAHYGERI (188 aa)). Residues arginine 71, 76-79 (GAVF), and lysine 134 contribute to the ATP site. Lysine 134 provides a ligand contact to (R)-lipoate.

Belongs to the LplA family. In terms of assembly, monomer.

Its subcellular location is the cytoplasm. It catalyses the reaction L-lysyl-[lipoyl-carrier protein] + (R)-lipoate + ATP = N(6)-[(R)-lipoyl]-L-lysyl-[lipoyl-carrier protein] + AMP + diphosphate + H(+). It functions in the pathway protein modification; protein lipoylation via exogenous pathway; protein N(6)-(lipoyl)lysine from lipoate: step 1/2. It participates in protein modification; protein lipoylation via exogenous pathway; protein N(6)-(lipoyl)lysine from lipoate: step 2/2. Functionally, catalyzes both the ATP-dependent activation of exogenously supplied lipoate to lipoyl-AMP and the transfer of the activated lipoyl onto the lipoyl domains of lipoate-dependent enzymes. This is Lipoate-protein ligase A from Salmonella typhi.